We begin with the raw amino-acid sequence, 169 residues long: Protein FAM106A (169 aa).

It belongs to the FAM106 family.

The chain is Protein FAM106A (FAM106A) from Homo sapiens (Human).